The chain runs to 147 residues: Thyrotropin subunit beta (147 aa).

Residues 1–20 (MRVVLLASAVLCLLAGQVLS) form the signal peptide. Cystine bridges form between Cys-22–Cys-72, Cys-36–Cys-87, Cys-39–Cys-126, Cys-47–Cys-103, Cys-51–Cys-105, and Cys-108–Cys-115. An N-linked (GlcNAc...) asparagine glycan is attached at Asn-43.

It belongs to the glycoprotein hormones subunit beta family. As to quaternary structure, heterodimer of a common alpha chain and a unique beta chain which confers biological specificity to thyrotropin, lutropin, follitropin and gonadotropin.

Its subcellular location is the secreted. In terms of biological role, indispensable for the control of thyroid structure and metabolism. May play some role in the biological processes of the immature fishes. In Anguilla anguilla (European freshwater eel), this protein is Thyrotropin subunit beta (tshb).